A 450-amino-acid chain; its full sequence is Succinate-semialdehyde dehydrogenase (450 aa).

119–120 (WN) contributes to the NADP(+) binding site. Arginine 128 contacts substrate. Residues 143-146 (KPAK) and 197-198 (GS) contribute to the NADP(+) site. Glutamate 219 serves as the catalytic Proton acceptor. Residue leucine 220 participates in NADP(+) binding. Substrate contacts are provided by arginine 247 and cysteine 253. Residue cysteine 253 is the Nucleophile of the active site. Glutamate 350 serves as a coordination point for NADP(+). Serine 410 provides a ligand contact to substrate.

This sequence belongs to the aldehyde dehydrogenase family. Homodimer.

The catalysed reaction is succinate semialdehyde + NAD(+) + H2O = succinate + NADH + 2 H(+). The enzyme catalyses succinate semialdehyde + NADP(+) + H2O = succinate + NADPH + 2 H(+). The protein operates within alkaloid degradation; nicotine degradation. Functionally, catalyzes the NAD(P)(+)-dependent oxidation of succinate semialdehyde to succinate, which may enter the citric acid cycle. Is involved in the catabolism of 4-methylaminobutanoate produced from nicotine. Acts preferentially with NADP(+) as cosubstrate but can also use NAD(+). To a lesser extent, is active also towards butyraldehyde (8.5% of the activity observed with succinate semialdehyde) and propionaldehyde (1.6% of the activity observed with succinate semialdehyde) as substrates. The chain is Succinate-semialdehyde dehydrogenase (sad) from Paenarthrobacter nicotinovorans (Arthrobacter nicotinovorans).